The sequence spans 473 residues: MALRHTISPQFSNRHSPPVTRSVSRTGVHQPLDTSTPVTRRDSQPGTITGTIQRFHESADDSEIDLNSSKFIYKEHFSYKEITSMKKEMWYDWLEYRIRMVRRRFVPTWAQFKRTLMAVVLFAMLYKYARDCLFDGTHHNSEGSYADKDANWASEKQKFHQTISNLRAEFSAHDKQLDFKTDHLEKLLENVLEHSKGWKESAIEELKQIKLWQAEISDALQQMKKEIDDAKSTKIIHSTPEKAPETAPTASLPPSSQLQPMHITRRALLGVNVANSLIGASIDHSCSSRPVSAKDGFFYDFMSYFGTFQEGYALLDRDVLSPGEAWCTYDKRATLTVKLARFVIPKSVSYQHVRWSGIVPNHAPKLYDVVACTDSCCTKWQPLVANCEYKERDGSYDEQEQFCSVPTIQNHSPINHVQFRFRENHGDMPKTCAYLIRVYGEPVDPPKETQPMTDNGTESKLESAIVNSVSETA.

The interval 1–47 (MALRHTISPQFSNRHSPPVTRSVSRTGVHQPLDTSTPVTRRDSQPGT) is disordered. Over residues 7–47 (ISPQFSNRHSPPVTRSVSRTGVHQPLDTSTPVTRRDSQPGT) the composition is skewed to polar residues. Coiled-coil stretches lie at residues 163 to 191 (ISNLRAEFSAHDKQLDFKTDHLEKLLENV) and 204 to 235 (EELKQIKLWQAEISDALQQMKKEIDDAKSTKI). The disordered stretch occupies residues 237 to 257 (HSTPEKAPETAPTASLPPSSQ). Residues 248–257 (PTASLPPSSQ) are compositionally biased toward polar residues. A helical membrane pass occupies residues 262-282 (HITRRALLGVNVANSLIGASI). The SUN domain maps to 279–443 (GASIDHSCSS…YLIRVYGEPV (165 aa)). The segment at 443-473 (VDPPKETQPMTDNGTESKLESAIVNSVSETA) is disordered.

The protein resides in the nucleus membrane. Its subcellular location is the nucleus envelope. Functionally, involved in centrosome attachment to the nucleus. Required for zyg-12 localization to the nuclear envelope. Together with pot-1, it is required to anchor telomeres to the nuclear envelope in embryos. The protein is Sun domain-containing protein 1 of Caenorhabditis elegans.